The primary structure comprises 182 residues: ATP-dependent protease subunit HslV (182 aa).

Residue threonine 2 is part of the active site. Residues glycine 157, cysteine 160, and threonine 163 each coordinate Na(+).

Belongs to the peptidase T1B family. HslV subfamily. In terms of assembly, a double ring-shaped homohexamer of HslV is capped on each side by a ring-shaped HslU homohexamer. The assembly of the HslU/HslV complex is dependent on binding of ATP.

It localises to the cytoplasm. The catalysed reaction is ATP-dependent cleavage of peptide bonds with broad specificity.. Its activity is regulated as follows. Allosterically activated by HslU binding. In terms of biological role, protease subunit of a proteasome-like degradation complex believed to be a general protein degrading machinery. The sequence is that of ATP-dependent protease subunit HslV from Sodalis glossinidius (strain morsitans).